Here is a 222-residue protein sequence, read N- to C-terminus: UPF0173 metal-dependent hydrolase Nther_2337 (222 aa).

The protein belongs to the UPF0173 family.

This chain is UPF0173 metal-dependent hydrolase Nther_2337, found in Natranaerobius thermophilus (strain ATCC BAA-1301 / DSM 18059 / JW/NM-WN-LF).